A 122-amino-acid chain; its full sequence is METVSHLRLAFNKPGRGGDGPTFPVGGWLRAGSLEDGAAALAMISSSSSLGGLSSSSSSRLSQLSISSSSETSSAWLSSQDSSSSSHCSCSFCCFWDRRSAMACLFPLGGMFLRAARSGGGG.

This is an uncharacterized protein from Human adenovirus F serotype 41 (HAdV-41).